Here is a 311-residue protein sequence, read N- to C-terminus: Putative mitochondrial transporter UCP3 (311 aa).

Over 1–10 (MVGLQPSERP) the chain is Mitochondrial intermembrane. A helical transmembrane segment spans residues 11 to 32 (PTTSVKFLAAGTAACFADLLTF). Solcar repeat units lie at residues 11 to 105 (PTTS…VKQF), 114 to 205 (SSII…IKEK), and 214 to 299 (DNFP…MKRA). The Mitochondrial matrix segment spans residues 33 to 76 (PLDTAKVRLQIQGENQAALAARSAQYRGVLGTILTMVRTEGPRS). The chain crosses the membrane as a helical span at residues 77–99 (LYSGLVAGLQRQMSFASIRIGLY). Topologically, residues 100–119 (DSVKQFYTPKGSDHSSIITR) are mitochondrial intermembrane. The helical transmembrane segment at 120 to 136 (ILAGCTTGAMAVTCAQP) threads the bilayer. The Mitochondrial matrix segment spans residues 137–182 (TDVVKIRFQASMHTGLGGNRKYSGTMDAYRTIAREEGVRGLWKGIL). A helical membrane pass occupies residues 183–199 (PNITRNAIVNCGEMVTY). The Mitochondrial intermembrane portion of the chain corresponds to 200 to 216 (DIIKEKLLDYHLLTDNF). A helical membrane pass occupies residues 217-236 (PCHFVSAFGAGFCATLVASP). Residues 237–270 (VDVVKTRYMNSPPGQYHSPFDCMLKMVTQEGPTA) are Mitochondrial matrix-facing. Residues 271–293 (FYKGFTPSFLRLGSWNVVMFVTY) traverse the membrane as a helical segment. A purine nucleotide binding region spans residues 278–300 (SFLRLGSWNVVMFVTYEQMKRAL). Over 294-311 (EQMKRALMKVQMLRDSPF) the chain is Mitochondrial intermembrane.

The protein belongs to the mitochondrial carrier (TC 2.A.29) family. As to quaternary structure, interacts with HAX1; the interaction is direct and calcium-dependent.

It localises to the mitochondrion inner membrane. Functionally, putative transmembrane transporter that plays a role in mitochondrial metabolism via an as yet unclear mechanism. Originally, this mitochondrial protein was thought to act as a proton transmembrane transporter from the mitochondrial intermembrane space into the matrix, causing proton leaks through the inner mitochondrial membrane, thereby uncoupling mitochondrial membrane potential generation from ATP synthesis. However, this function is controversial and uncoupling may not be the function, or at least not the main function, but rather a consequence of more conventional metabolite transporter activity. The sequence is that of Putative mitochondrial transporter UCP3 from Bos taurus (Bovine).